A 431-amino-acid chain; its full sequence is Ubiquitin-like modifier-activating enzyme 5 (431 aa).

ATP contacts are provided by Gly92, Asp113, Lys136, Asn159, and Asn197. Residues Cys239 and Cys242 each coordinate Zn(2+). Cys263 functions as the Glycyl thioester intermediate in the catalytic mechanism. Zn(2+) contacts are provided by Cys316 and Cys321. Residues 339–396 form a disordered region; sequence AKAKMEADASTTIDEGPLHDDNEWNISVVDDENEKDTTKAASSSDTLPEGLTRELPVA.

The protein belongs to the ubiquitin-activating E1 family. UBA5 subfamily.

Functionally, E1-like enzyme which activates UFM1. The chain is Ubiquitin-like modifier-activating enzyme 5 from Arabidopsis thaliana (Mouse-ear cress).